Reading from the N-terminus, the 278-residue chain is Phosphatidylglycerol--prolipoprotein diacylglyceryl transferase (278 aa).

Helical transmembrane passes span 19 to 39 (WYGILMATGVLVATLMAINEG), 49 to 69 (FIDFLLWAVPIGFIGARIYYV), 83 to 103 (IIAIWNGGIAIYGGLIAGLIV), and 112 to 132 (MLPPFLMLDIIAPGVMAAQVI). Arg-134 is a binding site for a 1,2-diacyl-sn-glycero-3-phospho-(1'-sn-glycerol). 3 helical membrane-spanning segments follow: residues 174–194 (QPTYLYESALNLVGLILILSL), 204–224 (GEVFFSYVIWYAAVRFFVEGM), and 235–255 (IRVSQALSLILFFGAIILWVY).

This sequence belongs to the Lgt family.

Its subcellular location is the cell membrane. The enzyme catalyses L-cysteinyl-[prolipoprotein] + a 1,2-diacyl-sn-glycero-3-phospho-(1'-sn-glycerol) = an S-1,2-diacyl-sn-glyceryl-L-cysteinyl-[prolipoprotein] + sn-glycerol 1-phosphate + H(+). It participates in protein modification; lipoprotein biosynthesis (diacylglyceryl transfer). Functionally, catalyzes the transfer of the diacylglyceryl group from phosphatidylglycerol to the sulfhydryl group of the N-terminal cysteine of a prolipoprotein, the first step in the formation of mature lipoproteins. The polypeptide is Phosphatidylglycerol--prolipoprotein diacylglyceryl transferase (Lactobacillus gasseri (strain ATCC 33323 / DSM 20243 / BCRC 14619 / CIP 102991 / JCM 1131 / KCTC 3163 / NCIMB 11718 / NCTC 13722 / AM63)).